The following is a 331-amino-acid chain: D-alanine--D-alanine ligase (331 aa).

The ATP-grasp domain maps to 116-316; sequence KRLWQTHSLP…YEDFVLQLAA (201 aa). ATP is bound at residue 142–197; the sequence is ADRLGLPLIVKPAREGSSIGLTKVTSVAELPAAYEKAARLDRDVMAEQFIDGDELT. Positions 269, 283, and 285 each coordinate Mg(2+).

This sequence belongs to the D-alanine--D-alanine ligase family. Requires Mg(2+) as cofactor. It depends on Mn(2+) as a cofactor.

The protein resides in the cytoplasm. It catalyses the reaction 2 D-alanine + ATP = D-alanyl-D-alanine + ADP + phosphate + H(+). It functions in the pathway cell wall biogenesis; peptidoglycan biosynthesis. In terms of biological role, cell wall formation. This chain is D-alanine--D-alanine ligase, found in Ralstonia nicotianae (strain ATCC BAA-1114 / GMI1000) (Ralstonia solanacearum).